Consider the following 181-residue polypeptide: ATP synthase subunit delta (181 aa).

Belongs to the ATPase delta chain family. In terms of assembly, F-type ATPases have 2 components, F(1) - the catalytic core - and F(0) - the membrane proton channel. F(1) has five subunits: alpha(3), beta(3), gamma(1), delta(1), epsilon(1). F(0) has three main subunits: a(1), b(2) and c(10-14). The alpha and beta chains form an alternating ring which encloses part of the gamma chain. F(1) is attached to F(0) by a central stalk formed by the gamma and epsilon chains, while a peripheral stalk is formed by the delta and b chains.

The protein localises to the cell inner membrane. Functionally, f(1)F(0) ATP synthase produces ATP from ADP in the presence of a proton or sodium gradient. F-type ATPases consist of two structural domains, F(1) containing the extramembraneous catalytic core and F(0) containing the membrane proton channel, linked together by a central stalk and a peripheral stalk. During catalysis, ATP synthesis in the catalytic domain of F(1) is coupled via a rotary mechanism of the central stalk subunits to proton translocation. Its function is as follows. This protein is part of the stalk that links CF(0) to CF(1). It either transmits conformational changes from CF(0) to CF(1) or is implicated in proton conduction. This Mannheimia succiniciproducens (strain KCTC 0769BP / MBEL55E) protein is ATP synthase subunit delta.